Reading from the N-terminus, the 403-residue chain is Poly(rC)-binding protein 4 (403 aa).

KH domains are found at residues 17–67 (TLTL…TITG), 101–154 (PVTL…TVSG), and 241–293 (TSSQ…TITG).

Its subcellular location is the cytoplasm. In terms of biological role, single-stranded nucleic acid binding protein that binds preferentially to oligo dC. The chain is Poly(rC)-binding protein 4 (PCBP4) from Bos taurus (Bovine).